Reading from the N-terminus, the 445-residue chain is Rab GDP dissociation inhibitor beta (445 aa).

At M1 the chain carries N-acetylmethionine. Position 57 is an N6-succinyllysine (K57). At K112 the chain carries N6-acetyllysine. Residue S130 is modified to Phosphoserine. An N6-acetyllysine modification is found at K269. The residue at position 382 (S382) is a Phosphoserine.

It belongs to the Rab GDI family. In terms of assembly, interacts with RHOH. Interacts with the GDP-bound inactive forms of RAB3A, RAB3B, RAB3C, RAB5A, RAB5B, RAB5C, RAB8A, RAB8B, RAB10, RAB12, RAB35, and RAB43; binds RAB3D to a lesser extent. Interacts with DZIP1; this interaction negatively regulates the interaction of GDI2 with GDP-bound RAB8A. Ubiquitously expressed.

It is found in the cytoplasm. It localises to the membrane. The protein resides in the golgi apparatus. Its subcellular location is the trans-Golgi network. Its function is as follows. GDP-dissociation inhibitor preventing the GDP to GTP exchange of most Rab proteins. By keeping these small GTPases in their inactive GDP-bound form regulates intracellular membrane trafficking. Negatively regulates protein transport to the cilium and ciliogenesis through the inhibition of RAB8A. In Bos taurus (Bovine), this protein is Rab GDP dissociation inhibitor beta (GDI2).